Reading from the N-terminus, the 769-residue chain is Type IV pilus biogenesis and competence protein PilQ (769 aa).

The first 24 residues, methionine 1–alanine 24, serve as a signal peptide directing secretion. 2 stretches are compositionally biased toward low complexity: residues alanine 135–proline 154 and alanine 197–glutamine 225. Disordered stretches follow at residues alanine 135–threonine 156 and alanine 197–isoleucine 228.

The protein belongs to the bacterial secretin family. PilQ subfamily. In terms of assembly, homododecamer. Tetramer of trimer.

The protein resides in the cell outer membrane. Its function is as follows. Required for type IV pilus biogenesis and competence. Could function as a pore for exit of the pilus but also as a channel for entry of heme and antimicrobial agents and uptake of transforming DNA. The protein is Type IV pilus biogenesis and competence protein PilQ (pilQ) of Neisseria meningitidis serogroup B (strain ATCC BAA-335 / MC58).